Consider the following 630-residue polypeptide: Golgin subfamily A member 8K (630 aa).

The segment at 1–76 is disordered; the sequence is MAEETQHNKL…TSSATLKDLE (76 aa). Coiled coils occupy residues 86–148 and 224–411; these read LDSR…LNTD and LTQL…QQNQ. A compositionally biased stretch (basic and acidic residues) spans 352 to 362; sequence KQEERIQEQHK. Disordered regions lie at residues 352-379 and 424-444; these read KQEERIQEQHKSLQQLAKPQSVFEEPNN and GEGHGEHLDSEGEEAPQPMPS.

It belongs to the GOLGA8 family.

The protein is Golgin subfamily A member 8K of Homo sapiens (Human).